The chain runs to 801 residues: Heavy metal tolerance factor 1 (801 aa).

Residues 1 to 24 are Lumenal-facing; sequence MGFSPFLDECRAEGLWPIGPSCNK. A helical membrane pass occupies residues 25–45; sequence IISFGVYTFFIVVNFIVLCIP. Topologically, residues 46 to 75 are cytoplasmic; that stretch reads NSNSANNNYRRMTDDDASSTSKLTISKILS. Residues 76-96 form a helical membrane-spanning segment; that stretch reads ICTIFAVICQSIFYFCFTFYF. Residues 97–101 lie on the Lumenal side of the membrane; sequence HPYTH. A helical transmembrane segment spans residues 102–122; that stretch reads LLLAFCVSKLFFWILSLCSFS. Topologically, residues 123–129 are cytoplasmic; sequence KWRNQPS. A helical transmembrane segment spans residues 130-150; sequence TPISLAFAFSAALLIHCIPLT. The Lumenal portion of the chain corresponds to 151–167; sequence DWKKYFEPTSKNRGDLT. A helical membrane pass occupies residues 168–188; the sequence is FYIIELALVTVVFFFTIVTGL. At 189-226 the chain is on the cytoplasmic side; sequence FNFSGCSSRESAWNNLSKKVVTVAPYIWPTKSISLQLR. Residues 227-247 form a helical membrane-spanning segment; that stretch reads VVFCLFLLIIGRLINVSLPIL. An ABC transmembrane type-1 domain is found at 227–516; the sequence is VVFCLFLLII…FGTIYRVIQK (290 aa). Residues 248–264 lie on the Lumenal side of the membrane; the sequence is SKWIVDELATPDTFQYS. The helical transmembrane segment at 265 to 285 threads the bilayer; the sequence is LLFLATFLKFLQGNGAMGGFL. The Cytoplasmic portion of the chain corresponds to 286 to 341; it reads NTVRTYLWIPIQQYTTRELEVELFKHLHSLSLRWHLSRKTGQVLRVMDRGTSSVNN. A helical transmembrane segment spans residues 342-364; that stretch reads ILNYILFNVVPTIADIVIAVIFF. At 365–371 the chain is on the lumenal side; that stretch reads FSAFNAY. A helical membrane pass occupies residues 372 to 390; that stretch reads FGLIVFGTMALYLTVTISI. Residues 391-461 are Cytoplasmic-facing; that stretch reads TEWRTQYIRE…SLAFLNCLQN (71 aa). Residues 462–482 traverse the membrane as a helical segment; the sequence is AIIGIGMIGGSVFVVYMIVHE. Residues 483–489 lie on the Lumenal side of the membrane; it reads KTLTVGD. The chain crosses the membrane as a helical span at residues 490-510; sequence YVLFTTYLLQLYTPLNFFGTI. Residues 511-801 lie on the Cytoplasmic side of the membrane; sequence YRVIQKAFVD…KSIELGEELP (291 aa). An ABC transporter domain is found at 550-784; the sequence is ISVKNLTFEY…QGTYASMWEA (235 aa). Residue 583–590 coordinates ATP; that stretch reads GSSGSGKS.

Belongs to the ABC transporter superfamily. ABCB family. Heavy Metal importer (TC 3.A.1.210) subfamily. Expressed in coelomocytes, as well as in head and tail neurons, and in the intestinal cells.

The protein localises to the vacuole membrane. The protein resides in the early endosome. Its subcellular location is the late endosome. It is found in the recycling endosome. Functionally, may play a pivotal role in the detoxification of heavy metals such as cadmium but do not depend exclusively on phytochelatins (PC) synthesis. In Caenorhabditis elegans, this protein is Heavy metal tolerance factor 1.